The following is an 821-amino-acid chain: Integrator complex assembly factor BRAT1 (821 aa).

The interval 100 to 200 (PGLFGEPGPL…WPACAQKIMD (101 aa)) is required for interaction with NDFIP1. HEAT repeat units follow at residues 495 to 531 (PQFLRELFPVLQKRLCHPCWEVRDSALEFLTQLSRHW) and 544 to 576 (SEVPQLALQLLQDPESYVRASAVTAMGQLSSQG). The segment at 741 to 767 (GSPNTASAEATLPRWRAGEQAQPPGDQ) is disordered. The residue at position 742 (serine 742) is a Phosphoserine. Positions 819–821 (DCY) match the BRAT1-like motif motif. Cysteine 820 contacts Zn(2+).

This sequence belongs to the BRAT1 family. As to quaternary structure, part of the multiprotein complex composed of BRAT1, WDR73, as well as integrator complex subunits INTS9 and INTS11. Interacts with BRCA1 and ATM. Interacts with MTOR and RPTOR. Interacts with NDFIP1. Interacts with SMC1A and PRKDC. Post-translationally, ubiquitinated by NEDD4, NEDD4L and ITCH; mono- and polyubiquitinated forms are detected. Ubiquitously expressed.

Its subcellular location is the nucleus. The protein localises to the cytoplasm. Its function is as follows. Component of a multiprotein complex required for the assembly of the RNA endonuclease module of the integrator complex. Associates with INTS9 and INTS11 in the cytoplasm and blocks the active site of INTS11 to inhibit the endonuclease activity of INTS11 before formation of the full integrator complex. Following dissociation of WDR73 of the complex, BRAT1 facilitates the nuclear import of the INTS9-INTS11 heterodimer. In the nucleus, INTS4 is integrated to the INTS9-INTS11 heterodimer and BRAT1 is released from the mature RNA endonuclease module by inositol hexakisphosphate (InsP6). BRAT1 is also involved in DNA damage response; activates kinases ATM, SMC1A and PRKDC by modulating their phosphorylation status following ionizing radiation (IR) stress. Plays a role in regulating mitochondrial function and cell proliferation. Required for protein stability of MTOR and MTOR-related proteins, and cell cycle progress by growth factors. This is Integrator complex assembly factor BRAT1 from Homo sapiens (Human).